Reading from the N-terminus, the 96-residue chain is Envelope glycoprotein N (96 aa).

The first 21 residues, 1-21 (MPRSPLIVAVVAAALFAIVRG), serve as a signal peptide directing secretion. At 22 to 54 (RDPLLDAMRREGAMDFWSAGCYARGVPLSEPPQ) the chain is on the virion surface side. The chain crosses the membrane as a helical span at residues 55–75 (ALVVFYVALTAVMVAVALYAY). Topologically, residues 76-96 (GLCFRLMGASGPNKKESRGRG) are intravirion.

It belongs to the herpesviridae glycoprotein N family. In terms of assembly, interacts (via N-terminus) with gM (via N-terminus). The gM-gN heterodimer forms the gCII complex.

The protein resides in the virion membrane. It is found in the host membrane. Its subcellular location is the host Golgi apparatus. The protein localises to the host trans-Golgi network. Functionally, envelope glycoprotein necessary for proper maturation of gM and modulation of its membrane fusion activity. Also plays a critical role in virion morphogenesis. The chain is Envelope glycoprotein N from Bos taurus (Bovine).